A 992-amino-acid chain; its full sequence is Ankyrin repeat domain-containing protein 18A (992 aa).

ANK repeat units follow at residues 67 to 96 (KDRTVLHLACAHGRVQVVTLLLHRRCQIDI), 100 to 129 (LNRTPLMKAVHSQEEACAIVLLECGANPNI), 133 to 162 (YGNTALHYAVYNKGTSLAERLLSHHANIEA), 166 to 195 (EGNTPLLFAINSRRQHMVEFLLKNQANIHA), and 199 to 228 (FKRTALILAVQHNLSSIVTLLLQQNIRISS). Residues 262–320 (NHLRNDNQETAAMKPANLKKRKERAKAEHNLKVASEEKQERLQRSENKQPQDSQSYGKK) form a disordered region. Coiled-coil stretches lie at residues 278–310 (NLKKRKERAKAEHNLKVASEEKQERLQRSENKQ), 378–618 (KMIT…AERE), 683–713 (ISLLNYTADQIRKKNRELEEEATGYKKCLEM), and 743–899 (FKKL…EAFA). Positions 286 to 310 (AKAEHNLKVASEEKQERLQRSENKQ) are enriched in basic and acidic residues.

This chain is Ankyrin repeat domain-containing protein 18A (ANKRD18A), found in Homo sapiens (Human).